The chain runs to 107 residues: U1-lycotoxin-Ls1e (107 aa).

A signal peptide spans 1–20; that stretch reads MMKVLVVVALLVTLISYSSS. Residues 21-41 constitute a propeptide that is removed on maturation; it reads EGIDDLEADELLSLMANEQTR. 4 disulfide bridges follow: C44–C59, C51–C68, C58–C86, and C70–C84.

It belongs to the neurotoxin 19 (CSTX) family. 04 (U1-Lctx) subfamily. As to expression, expressed by the venom gland.

Its subcellular location is the secreted. The sequence is that of U1-lycotoxin-Ls1e from Lycosa singoriensis (Wolf spider).